The following is a 185-amino-acid chain: Ribosome-recycling factor (185 aa).

This sequence belongs to the RRF family.

The protein localises to the cytoplasm. Responsible for the release of ribosomes from messenger RNA at the termination of protein biosynthesis. May increase the efficiency of translation by recycling ribosomes from one round of translation to another. The protein is Ribosome-recycling factor of Haemophilus ducreyi (strain 35000HP / ATCC 700724).